Consider the following 488-residue polypeptide: Protein DETOXIFICATION 35 (488 aa).

12 helical membrane passes run 38-58 (LWMI…VSSV), 73-93 (AVSI…LGMG), 121-141 (IILF…TPVL), 150-170 (IAVP…SLAF), 187-207 (IAWI…LFII), 218-238 (LAFN…VIGW), 262-282 (IASA…IVLT), 296-316 (SICM…NAAI), 336-356 (VYVT…AIII), 379-401 (AYLL…VAVG), 408-428 (VAYI…YLLG), and 439-459 (WSGM…VLYK).

It belongs to the multi antimicrobial extrusion (MATE) (TC 2.A.66.1) family. In terms of tissue distribution, highly expressed in inflorescence tissues, especially in floral epidermal guard cells including those of the anthers, stigma, siliques and nectaries. Also detected in the meristematic zone of the root apex and in the elongation zone through to the fully expanded cells of the differentiation zone.

The protein localises to the vacuole membrane. Functionally, multidrug and toxin efflux transporter involved in flavonoid metabolism. Required for proper reproductive development. This chain is Protein DETOXIFICATION 35, found in Arabidopsis thaliana (Mouse-ear cress).